The following is a 147-amino-acid chain: Hemoglobin subunit beta (147 aa).

At V2 the chain carries N-acetylvaline. The 145-residue stretch at 3 to 147 folds into the Globin domain; the sequence is HLTGEEKAAV…VANALAHKYH (145 aa). The residue at position 13 (T13) is a Phosphothreonine. S45 is modified (phosphoserine). At K60 the chain carries N6-acetyllysine. H64 contributes to the heme b binding site. At K83 the chain carries N6-acetyllysine. H93 serves as a coordination point for heme b. An S-nitrosocysteine modification is found at C94. Position 145 is an N6-acetyllysine (K145).

It belongs to the globin family. As to quaternary structure, heterotetramer of two alpha chains and two beta chains. As to expression, red blood cells.

Functionally, involved in oxygen transport from the lung to the various peripheral tissues. The protein is Hemoglobin subunit beta (HBB) of Lagothrix lagotricha (Brown woolly monkey).